We begin with the raw amino-acid sequence, 176 residues long: Putative REP-associated tyrosine transposase (176 aa).

Mg(2+) is bound by residues His-59 and His-61. The active-site Nucleophile is the Tyr-148.

It belongs to the transposase 17 family. RAYT subfamily. Homodimer. Mg(2+) serves as cofactor.

Transposase responsible for transposition an insertion sequence (IS) element. Transposition occurs in 2 main steps, excision from the donor DNA 'top strand' into a single strand circle and its subsequent reinsertion into the DNA target. This increases the copy number of the IS. The polypeptide is Putative REP-associated tyrosine transposase (Haemophilus influenzae (strain ATCC 51907 / DSM 11121 / KW20 / Rd)).